Reading from the N-terminus, the 225-residue chain is PKHD-type hydroxylase Smal_0990 (225 aa).

Residues 78 to 177 (KYLPPRFNRY…RVASFFWVQS (100 aa)) form the Fe2OG dioxygenase domain. 3 residues coordinate Fe cation: His-96, Asp-98, and His-158. A 2-oxoglutarate-binding site is contributed by Arg-168.

Requires Fe(2+) as cofactor. It depends on L-ascorbate as a cofactor.

This Stenotrophomonas maltophilia (strain R551-3) protein is PKHD-type hydroxylase Smal_0990.